We begin with the raw amino-acid sequence, 454 residues long: MAYQMASLKIEMKEVVHVKPSKPTPSIVLPLSTLDHRPYPDSIWPIVHVYQSPSNGQLDPAFVLKQALSKALVYYYPLAGKLVKQPNGKVAINCNNDGVPFLEAIANCELSSLNYLDDHDIRIAKQLVFDFHPQQDENEYPHPVSFKLTKFQCGGFTIGMSTSHIVCDGWGACKFFHAIVELASGKSEPFLKPVWERERLIGSITTQPMPNPMDEATAAVSPFLPATDVMYELFKVDKESIRRLKMSLMKEISCNESMEQGFTTFESLAAYVWRSRARALNLNNEGKTLLVFSVQVRQHMSPPLSDGYYGTAITEGQVVLTMKELNEKPLSDIVKLVKESKNVAFTGDFIKKTIDTLESNPENFNVEEGPGATLALSDWKHLGFMPNVDFGWKEPINMVPAPCNMFEYEGLCIFLSPSNHDPSMEGGVRVFISLPSVAMPKFKEEMEALKVITP.

Residues H164 and D389 each act as proton acceptor in the active site.

The protein belongs to the plant acyltransferase family. Monomer.

It catalyses the reaction tetrahydroanabasine + acetyl-CoA = ammodendrine + CoA. The protein operates within alkaloid biosynthesis. In terms of biological role, tetrahydroanabasine acetyltransferase involved in the accumulation of quinolizidine type antinutritional alkaloids (QAs) natural products. QAs impart a bitter taste to plants, acting as repellents and toxicants for herbivores and predators, and possess a variety of pharmacological effects, including sedative, anticonvulsant, anti-inflammatory, antiviral, antitumor, antipyretic, anti-hepatitis B, antifibrotic, antiallergic, antidiarrheal, analgesic and antimicrobial activities. Mediates the conversion of tetrahydroanabasine into ammodendrine. This Lupinus albus (White lupine) protein is Tetrahydroanabasine acetyltransferase.